The primary structure comprises 179 residues: Large ribosomal subunit protein uL6 (179 aa).

Belongs to the universal ribosomal protein uL6 family. In terms of assembly, part of the 50S ribosomal subunit.

This protein binds to the 23S rRNA, and is important in its secondary structure. It is located near the subunit interface in the base of the L7/L12 stalk, and near the tRNA binding site of the peptidyltransferase center. The sequence is that of Large ribosomal subunit protein uL6 from Mycobacterium sp. (strain KMS).